We begin with the raw amino-acid sequence, 647 residues long: DNA mismatch repair protein MutL (647 aa).

A disordered region spans residues 393 to 423 (VSLVANKQQPTVKQAKRSADDSDSEHGKLDY). The segment covering 409 to 423 (RSADDSDSEHGKLDY) has biased composition (basic and acidic residues).

This sequence belongs to the DNA mismatch repair MutL/HexB family.

In terms of biological role, this protein is involved in the repair of mismatches in DNA. It is required for dam-dependent methyl-directed DNA mismatch repair. May act as a 'molecular matchmaker', a protein that promotes the formation of a stable complex between two or more DNA-binding proteins in an ATP-dependent manner without itself being part of a final effector complex. This is DNA mismatch repair protein MutL from Streptococcus thermophilus (strain CNRZ 1066).